The chain runs to 95 residues: MSYLLASALLFALGVYGVLTRRTAILVFLSIELMLNAANLSLVGFARAYGLDGQVAALMVIAVAAAEVAVGLGLIVAIFRHRESTAVDDLSELRG.

The next 3 membrane-spanning stretches (helical) occupy residues 1 to 21 (MSYL…VLTR), 25 to 45 (ILVF…LVGF), and 59 to 79 (MVIA…VAIF).

The protein belongs to the complex I subunit 4L family. In terms of assembly, NDH-1 is composed of 15 different subunits. Subunits NuoA, H, J, K, L, M, N constitute the membrane sector of the complex.

The protein resides in the cell inner membrane. The enzyme catalyses a quinone + NADH + 5 H(+)(in) = a quinol + NAD(+) + 4 H(+)(out). NDH-1 shuttles electrons from NADH, via FMN and iron-sulfur (Fe-S) centers, to quinones in the respiratory chain. The immediate electron acceptor for the enzyme in this species is believed to be a menaquinone. Couples the redox reaction to proton translocation (for every two electrons transferred, four hydrogen ions are translocated across the cytoplasmic membrane), and thus conserves the redox energy in a proton gradient. This Thermus thermophilus (strain ATCC BAA-163 / DSM 7039 / HB27) protein is NADH-quinone oxidoreductase subunit K.